The following is a 238-amino-acid chain: Pyridoxine 5'-phosphate synthase (238 aa).

Asn-6 contacts 3-amino-2-oxopropyl phosphate. 1-deoxy-D-xylulose 5-phosphate is bound at residue Asp-8–His-9. Residue Arg-17 coordinates 3-amino-2-oxopropyl phosphate. Catalysis depends on His-42, which acts as the Proton acceptor. Positions 44 and 49 each coordinate 1-deoxy-D-xylulose 5-phosphate. The active-site Proton acceptor is the Glu-69. Thr-99 is a 1-deoxy-D-xylulose 5-phosphate binding site. His-186 serves as the catalytic Proton donor. 3-amino-2-oxopropyl phosphate is bound by residues Gly-187 and Gly-208–His-209.

Belongs to the PNP synthase family. As to quaternary structure, homooctamer; tetramer of dimers.

The protein localises to the cytoplasm. The enzyme catalyses 3-amino-2-oxopropyl phosphate + 1-deoxy-D-xylulose 5-phosphate = pyridoxine 5'-phosphate + phosphate + 2 H2O + H(+). Its pathway is cofactor biosynthesis; pyridoxine 5'-phosphate biosynthesis; pyridoxine 5'-phosphate from D-erythrose 4-phosphate: step 5/5. Its function is as follows. Catalyzes the complicated ring closure reaction between the two acyclic compounds 1-deoxy-D-xylulose-5-phosphate (DXP) and 3-amino-2-oxopropyl phosphate (1-amino-acetone-3-phosphate or AAP) to form pyridoxine 5'-phosphate (PNP) and inorganic phosphate. This chain is Pyridoxine 5'-phosphate synthase, found in Anaplasma marginale (strain St. Maries).